The chain runs to 435 residues: Serine--tRNA ligase (435 aa).

242–244 (TAE) lines the L-serine pocket. An ATP-binding site is contributed by 273 to 275 (RSE). Glu296 contacts L-serine. 360-363 (EISS) provides a ligand contact to ATP. Ser396 contributes to the L-serine binding site.

The protein belongs to the class-II aminoacyl-tRNA synthetase family. Type-1 seryl-tRNA synthetase subfamily. As to quaternary structure, homodimer. The tRNA molecule binds across the dimer.

It is found in the cytoplasm. It carries out the reaction tRNA(Ser) + L-serine + ATP = L-seryl-tRNA(Ser) + AMP + diphosphate + H(+). It catalyses the reaction tRNA(Sec) + L-serine + ATP = L-seryl-tRNA(Sec) + AMP + diphosphate + H(+). The protein operates within aminoacyl-tRNA biosynthesis; selenocysteinyl-tRNA(Sec) biosynthesis; L-seryl-tRNA(Sec) from L-serine and tRNA(Sec): step 1/1. In terms of biological role, catalyzes the attachment of serine to tRNA(Ser). Is also able to aminoacylate tRNA(Sec) with serine, to form the misacylated tRNA L-seryl-tRNA(Sec), which will be further converted into selenocysteinyl-tRNA(Sec). This chain is Serine--tRNA ligase, found in Vibrio vulnificus (strain CMCP6).